Consider the following 440-residue polypeptide: Xylose isomerase (440 aa).

Catalysis depends on residues histidine 101 and aspartate 104. Mg(2+) is bound by residues glutamate 232, glutamate 268, histidine 271, aspartate 296, aspartate 307, aspartate 309, and aspartate 339.

This sequence belongs to the xylose isomerase family. In terms of assembly, homotetramer. Requires Mg(2+) as cofactor.

The protein resides in the cytoplasm. It carries out the reaction alpha-D-xylose = alpha-D-xylulofuranose. The chain is Xylose isomerase from Escherichia coli O157:H7.